The primary structure comprises 116 residues: Ferredoxin-thioredoxin reductase, catalytic chain (116 aa).

Cysteine 57 contacts [4Fe-4S] cluster. Cysteine 59 serves as the catalytic Nucleophile. Cysteines 59 and 89 form a disulfide. Residues cysteine 76, cysteine 78, and cysteine 87 each contribute to the [4Fe-4S] cluster site.

This sequence belongs to the ferredoxin thioredoxin reductase beta subunit family. Heterodimer of subunit A (variable subunit) and subunit B (catalytic subunit). Heterodimeric FTR forms a complex with ferredoxin and thioredoxin. It depends on [4Fe-4S] cluster as a cofactor.

The protein localises to the plastid. Its subcellular location is the chloroplast. The catalysed reaction is [thioredoxin]-disulfide + 2 reduced [2Fe-2S]-[ferredoxin] + 2 H(+) = [thioredoxin]-dithiol + 2 oxidized [2Fe-2S]-[ferredoxin]. Catalytic subunit of the ferredoxin-thioredoxin reductase (FTR), which catalyzes the two-electron reduction of thioredoxins by the electrons provided by reduced ferredoxin. The polypeptide is Ferredoxin-thioredoxin reductase, catalytic chain (ftrB) (Pyropia yezoensis (Susabi-nori)).